The chain runs to 267 residues: ATP synthase subunit a (267 aa).

The next 5 membrane-spanning stretches (helical) occupy residues 38–58 (WHID…FVFY), 98–118 (IAPL…MDLI), 145–165 (NITF…SIKI), 208–228 (LFGN…MPWW), and 238–258 (AIFH…LTIV).

It belongs to the ATPase A chain family. In terms of assembly, F-type ATPases have 2 components, CF(1) - the catalytic core - and CF(0) - the membrane proton channel. CF(1) has five subunits: alpha(3), beta(3), gamma(1), delta(1), epsilon(1). CF(0) has three main subunits: a(1), b(2) and c(9-12). The alpha and beta chains form an alternating ring which encloses part of the gamma chain. CF(1) is attached to CF(0) by a central stalk formed by the gamma and epsilon chains, while a peripheral stalk is formed by the delta and b chains.

It localises to the cell inner membrane. Key component of the proton channel; it plays a direct role in the translocation of protons across the membrane. The chain is ATP synthase subunit a from Psychromonas ingrahamii (strain DSM 17664 / CCUG 51855 / 37).